Here is a 94-residue protein sequence, read N- to C-terminus: Pyrimidine/purine nucleoside phosphorylase (94 aa).

Belongs to the nucleoside phosphorylase PpnP family.

The catalysed reaction is a purine D-ribonucleoside + phosphate = a purine nucleobase + alpha-D-ribose 1-phosphate. It catalyses the reaction adenosine + phosphate = alpha-D-ribose 1-phosphate + adenine. The enzyme catalyses cytidine + phosphate = cytosine + alpha-D-ribose 1-phosphate. It carries out the reaction guanosine + phosphate = alpha-D-ribose 1-phosphate + guanine. The catalysed reaction is inosine + phosphate = alpha-D-ribose 1-phosphate + hypoxanthine. It catalyses the reaction thymidine + phosphate = 2-deoxy-alpha-D-ribose 1-phosphate + thymine. The enzyme catalyses uridine + phosphate = alpha-D-ribose 1-phosphate + uracil. It carries out the reaction xanthosine + phosphate = alpha-D-ribose 1-phosphate + xanthine. Its function is as follows. Catalyzes the phosphorolysis of diverse nucleosides, yielding D-ribose 1-phosphate and the respective free bases. Can use uridine, adenosine, guanosine, cytidine, thymidine, inosine and xanthosine as substrates. Also catalyzes the reverse reactions. The polypeptide is Pyrimidine/purine nucleoside phosphorylase (Aeromonas salmonicida (strain A449)).